A 1433-amino-acid polypeptide reads, in one-letter code: DNA-directed RNA polymerase subunit beta' (1433 aa).

Zn(2+)-binding residues include Cys-66, Cys-68, Cys-81, and Cys-84. Residues Asp-474, Asp-476, and Asp-478 each coordinate Mg(2+). Zn(2+) is bound by residues Cys-823, Cys-897, Cys-904, and Cys-907.

Belongs to the RNA polymerase beta' chain family. As to quaternary structure, the RNAP catalytic core consists of 2 alpha, 1 beta, 1 beta' and 1 omega subunit. When a sigma factor is associated with the core the holoenzyme is formed, which can initiate transcription. It depends on Mg(2+) as a cofactor. The cofactor is Zn(2+).

It catalyses the reaction RNA(n) + a ribonucleoside 5'-triphosphate = RNA(n+1) + diphosphate. DNA-dependent RNA polymerase catalyzes the transcription of DNA into RNA using the four ribonucleoside triphosphates as substrates. The chain is DNA-directed RNA polymerase subunit beta' from Amoebophilus asiaticus (strain 5a2).